We begin with the raw amino-acid sequence, 132 residues long: Small ribosomal subunit protein uS8 (132 aa).

The protein belongs to the universal ribosomal protein uS8 family. Part of the 30S ribosomal subunit. Contacts proteins S5 and S12.

Functionally, one of the primary rRNA binding proteins, it binds directly to 16S rRNA central domain where it helps coordinate assembly of the platform of the 30S subunit. The chain is Small ribosomal subunit protein uS8 from Streptococcus agalactiae serotype V (strain ATCC BAA-611 / 2603 V/R).